The following is a 106-amino-acid chain: MSKAVLKFIRLSPTKARLIAKEIQGMNAEEALAKLEFMPNKAARVIAKVVASAVANGGYDANEVVITSCRIDRGPYLKRFRPRARGMASRIQKPTAHIFVEVEKES.

Belongs to the universal ribosomal protein uL22 family. As to quaternary structure, part of the 50S ribosomal subunit.

In terms of biological role, this protein binds specifically to 23S rRNA; its binding is stimulated by other ribosomal proteins, e.g. L4, L17, and L20. It is important during the early stages of 50S assembly. It makes multiple contacts with different domains of the 23S rRNA in the assembled 50S subunit and ribosome. Functionally, the globular domain of the protein is located near the polypeptide exit tunnel on the outside of the subunit, while an extended beta-hairpin is found that lines the wall of the exit tunnel in the center of the 70S ribosome. This chain is Large ribosomal subunit protein uL22, found in Nautilia profundicola (strain ATCC BAA-1463 / DSM 18972 / AmH).